The sequence spans 235 residues: Transcriptional regulatory protein MalR (235 aa).

Residues 3–119 (NVLIVEDDPM…RFQTALSDYR (117 aa)) enclose the Response regulatory domain. D54 is modified (4-aspartylphosphate). The H-T-H motif DNA-binding region spans 178–197 (TEDLAKHTEISQVSIRKYLK).

In terms of processing, phosphorylated and activated by MalK.

Its subcellular location is the cytoplasm. Its function is as follows. Member of a two-component regulatory system MalK/MalR. Activates transcription of maeA, maeN and yflS in presence of malate by binding to their promoter region. The protein is Transcriptional regulatory protein MalR (malR) of Bacillus subtilis (strain 168).